The sequence spans 580 residues: Malto-oligosyltrehalose trehalohydrolase (580 aa).

Positions 56–88 (LPDPRSARQPDGVHARSQRWEPPGQFGAARTDT) are disordered. Over residues 60–69 (RSARQPDGVH) the composition is skewed to basic and acidic residues. 245-250 (RLDAVH) serves as a coordination point for substrate. Asp247 (nucleophile) is an active-site residue. Glu284 functions as the Proton donor in the catalytic mechanism. Residues 309–313 (DDIHH) and 379–384 (HDQVGN) contribute to the substrate site.

Belongs to the glycosyl hydrolase 13 family.

It is found in the cytoplasm. It carries out the reaction hydrolysis of (1-&gt;4)-alpha-D-glucosidic linkage in 4-alpha-D-[(1-&gt;4)-alpha-D-glucanosyl]n trehalose to yield trehalose and (1-&gt;4)-alpha-D-glucan.. Its pathway is glycan biosynthesis; trehalose biosynthesis. Its function is as follows. Is involved in the biosynthesis of trehalose but not in that of capsular glucan and glycogen. The polypeptide is Malto-oligosyltrehalose trehalohydrolase (treZ) (Mycobacterium tuberculosis (strain CDC 1551 / Oshkosh)).